A 1533-amino-acid chain; its full sequence is MKFLGGNDDRNGRGGVGVGTDAIVGSRGGVSQDAADAAGAAAAAAVGYVFQQRPSPGGVGVGVGGVGGGVPGVGAVGSTLHEAAAAEYAAHFAQKQQQTRWACGDDGHGIDNPDKWKYNPPMNPANAAPGGPPGNGSNGGPGAIGTIGMGSGLGGGGGGGAGGGNNGGSGTNGGLHHQSMAAAAANMAAMQQAAALAKHNHMISQAAAAVAAQQQHQHPHQQHPQQQQQQQQAQNQGHPHHLMGGGNGLGNGNGLGIQHPGQQQQQQQQQQQQQHPGQYNANLLNHAAALGHMSSYAQSGGSMYDHHGGAMHPGMNGGMPKQQPLGPPGAGGPQDYVYMGGQTTVPMGAAMMPPQNQYMNSSAVAAANRNAAITTSTAKKLWEKSDGKGVSSSTPGGPLHPLQIPGIGDPSSVWKDHTWSTQGENILVPPPSRAYAHGGASDTSNSGNAGILSPRDSTCAKVVEYVFSGSPTNKDSSLSGLEPHLRNLKFDDNDKSRDDKEKANSPFDTNGLKKDDQVTNSNGVVNGIDDDKGFNRTPGSRQPSPAEESQPRPPNLLFPPLPFNHMLMDHGQGMGGGLGGVVGSGNGVGGGSGGGGAGGAYAAHQQMAAQMSQLQPPMMNGVGGGMPMAAQSPMLNHQAAGPNHMESPGNLLQQQNFDVQQLFRSQNPGLAAVATNAAAAAAAAAAATSAASAAAAVGAPPVPNGSLQQSQQQQQQQQQQQQQQQMHMAAASQQFLAAQQQAQNAAYAAQQATSYVINPGQEAAPYMGMIAAAQMPYYGVAPWGMYPGNLIPQQGTQPRRPLTPSQQGAENQPYQVIPAFLDHTGSLLMGGPRTGTPMRLVSPAPVLVPPGATRAGPPPPQGPQLYQPQPQTAQQNLYSQQNGSSVGGLALNTSSLTGRRDSFDRSTSAFSPSTMDYTSSGVAAAANAVNSTVAQAAAAAAAAAAARGKWPGAMSGAASGAYGALGAGNASASPLGAPITPPPSAQSCLLGSRAPGAESRQRQQQQQQLAAVGLPATAAAAQAAVAAAANNMFGSNSSIFSNPLAIPGTAAVAAAAAAAAAANSRQVAATAAAAAAVAAAAGGVGGAPQPGRSRLLEDFRNQRYPNLQLRDLANHIVEFSQDQHGSRFIQQKLERATAAEKQMVFSEILAAAYSLMTDVFGNYVIQKFFEFGTPEQKNTLGMQVKGHVLQLALQMYGCRVIQKALESISPEQQQEIVHELDGHVLKCVKDQNGNHVVQKCIECVDPVALQFIINAFKGQVYSLSTHPYGCRVIQRILEHCTAEQTTPILDELHEHTEQLIQDQYGNYVIQHVLEHGKQEDKSILINSVRGKVLVLSQHKFASNVVEKCVTHATRGERTGLIDEVCTFNDNALHVMMKDQYANYVVQKMIDVSEPTQLKKLMTKIRPHMAALRKYTYGKHINAKLEKYYMKITNPITVGTGAGGVPAASSAAAVSSGATSASVTACTSGSSTTTTSTTNSLASPTICSVQENGSAMVVEPSSPDASESSSSVVSGAVNSSLGPIGPPTNGNVVL.

4 disordered regions span residues 102–149 (ACGD…TIGM), 207–276 (AAAV…QQHP), 304–331 (YDHH…PGAG), and 382–452 (WEKS…AGIL). Basic and acidic residues predominate over residues 103–117 (CGDDGHGIDNPDKWK). Residues 133 to 149 (PGNGSNGGPGAIGTIGM) show a composition bias toward gly residues. The segment covering 207 to 237 (AAAVAAQQQHQHPHQQHPQQQQQQQQAQNQG) has biased composition (low complexity). A compositionally biased stretch (gly residues) spans 243-255 (MGGGNGLGNGNGL). Residues 256–276 (GIQHPGQQQQQQQQQQQQQHP) show a composition bias toward low complexity. Phosphoserine occurs at positions 453, 468, 470, and 477. Residues 470 to 479 (SPTNKDSSLS) are compositionally biased toward polar residues. Disordered regions lie at residues 470 to 558 (SPTN…NLLF), 697 to 725 (VGAP…QQQQ), 846 to 912 (VLVP…AFSP), and 975 to 1008 (LGAP…QQQQ). Basic and acidic residues predominate over residues 483 to 503 (PHLRNLKFDDNDKSRDDKEKA). Serine 505 carries the phosphoserine modification. Residues 863-875 (PQLYQPQPQTAQQ) show a composition bias toward low complexity. One can recognise a PUM-HD domain in the interval 1091–1428 (GRSRLLEDFR…HINAKLEKYY (338 aa)). Pumilio repeat units follow at residues 1111–1146 (DLAN…MVFS), 1147–1182 (EILA…TLGM), 1183–1218 (QVKG…EIVH), 1219–1254 (ELDG…FIIN), 1255–1290 (AFKG…PILD), 1291–1326 (ELHE…ILIN), 1327–1362 (SVRG…GLID), and 1366–1402 (TFND…KLMT). The tract at residues 1126-1130 (SRFIQ) is adenine-nucleotide binding in RNA target. A uracil-nucleotide binding in RNA target region spans residues 1162-1166 (NYVIQ). The tract at residues 1198–1202 (CRVIQ) is adenine-nucleotide binding in RNA target. The non-specific-nucleotide binding in RNA target stretch occupies residues 1234 to 1238 (NHVVQ). Residues 1270–1274 (CRVIQ) are adenine-nucleotide binding in RNA target. The tract at residues 1306-1310 (NYVIQ) is uracil-nucleotide binding in RNA target. The guanine-nucleotide binding in RNA target stretch occupies residues 1342 to 1346 (SNVVE). The uracil-nucleotide binding in RNA target stretch occupies residues 1382–1386 (NYVVQ). A disordered region spans residues 1494–1533 (AMVVEPSSPDASESSSSVVSGAVNSSLGPIGPPTNGNVVL). Low complexity predominate over residues 1496–1519 (VVEPSSPDASESSSSVVSGAVNSS).

Interacts with nanos (nos) and brat. Acts via the formation of a quaternary complex composed of pum, nanos, brat and the 3'-UTR mRNA of hb.

Its subcellular location is the cytoplasm. It localises to the cytoplasmic ribonucleoprotein granule. Functionally, sequence-specific RNA-binding protein that acts as a post-transcriptional repressor by binding the 3'-UTR of mRNA targets. Binds to an RNA consensus sequence, the Pumilio Response Element (PRE), 5'-UGUANAUA-3', that is related to the Nanos Response Element (NRE). Mediates post-transcriptional repression of transcripts via different mechanisms: acts via direct recruitment of deadenylase complexes leading to translational inhibition and mRNA degradation. Also mediates deadenylation-independent repression by promoting accessibility of miRNAs. Mediates post-transcriptional silencing of E2f mRNA by binding to its 3'-UTR and promoting miRNA regulation. Required for abdominal development and to support proliferation and self-renewal of germ cells. Pum is the only gene required for nanos (nos) activity that is not also required for posterior localization of germline determinants. Pum is required during embryogenesis when nanos activity apparently moves anteriorly from the posterior pole. This is Maternal protein pumilio (pum) from Drosophila melanogaster (Fruit fly).